The following is an 80-amino-acid chain: Pigment-dispersing hormone type 2 (80 aa).

The signal sequence occupies residues 1–23; that stretch reads MARCFVVLAFLALAAMSLQVATA. Ala-77 carries the alanine amide modification.

This sequence belongs to the arthropod PDH family. Eyestalk.

It localises to the secreted. Functionally, the pigment-dispersing hormone causes the migration of the distal retinal pigment into the proximal end of the pigment chromatophore cells and thus decreases the amount of light entering the retinulas. May also function as a neurotransmitter and/or neuromodulator. The sequence is that of Pigment-dispersing hormone type 2 (PDH2) from Penaeus vannamei (Whiteleg shrimp).